Reading from the N-terminus, the 350-residue chain is MEVRHNWTHAEVRDLMEKPFMDLLFEAQLVHRQYQQTNYVQVSTLLSIKTGACPEDCKYCPQSARYTTDIEKERLMEVERVLDAAQKAKNAGSTRFCMGAAWKNPKERDMPHLTDMIKGVKGMGLETCMTLGMLTPDQAKQLATAGLDYYNHNLDTSPEFYGNIITTRTYQDRLDTLSHVRDAGMKICSGGIIGMGESANDRAGLLVELANLPVHPESVPINMLVKVKGTPLEEVDDVEPFDFIRLIAIARIMMPQSAVRLSAGRENMNEQMQALCFMAGANSVFYGCKLLTTPNPSEDKDMMLFNKLGINSQEVSQKPDEIEENELLDRVVERVTARPTKDDLFYDASV.

The region spanning 38–256 (NYVQVSTLLS…IAIARIMMPQ (219 aa)) is the Radical SAM core domain. [4Fe-4S] cluster is bound by residues Cys-53, Cys-57, and Cys-60. [2Fe-2S] cluster contacts are provided by Cys-97, Cys-128, Cys-188, and Arg-260.

The protein belongs to the radical SAM superfamily. Biotin synthase family. In terms of assembly, homodimer. Requires [4Fe-4S] cluster as cofactor. It depends on [2Fe-2S] cluster as a cofactor.

It carries out the reaction (4R,5S)-dethiobiotin + (sulfur carrier)-SH + 2 reduced [2Fe-2S]-[ferredoxin] + 2 S-adenosyl-L-methionine = (sulfur carrier)-H + biotin + 2 5'-deoxyadenosine + 2 L-methionine + 2 oxidized [2Fe-2S]-[ferredoxin]. The protein operates within cofactor biosynthesis; biotin biosynthesis; biotin from 7,8-diaminononanoate: step 2/2. Catalyzes the conversion of dethiobiotin (DTB) to biotin by the insertion of a sulfur atom into dethiobiotin via a radical-based mechanism. In Vibrio campbellii (strain ATCC BAA-1116), this protein is Biotin synthase.